The sequence spans 23 residues: Coenzyme PQQ synthesis protein A (23 aa).

The segment at residues 15–19 (EVTMY) is a cross-link (pyrroloquinoline quinone (Glu-Tyr)).

This sequence belongs to the PqqA family.

It participates in cofactor biosynthesis; pyrroloquinoline quinone biosynthesis. In terms of biological role, required for coenzyme pyrroloquinoline quinone (PQQ) biosynthesis. PQQ is probably formed by cross-linking a specific glutamate to a specific tyrosine residue and excising these residues from the peptide. The chain is Coenzyme PQQ synthesis protein A from Ectopseudomonas mendocina (strain ymp) (Pseudomonas mendocina).